A 527-amino-acid polypeptide reads, in one-letter code: Bifunctional purine biosynthesis protein PurH (527 aa).

Positions 1–149 (MASDFLPVRR…KNFARVAVAT (149 aa)) constitute an MGS-like domain.

It belongs to the PurH family.

It catalyses the reaction (6R)-10-formyltetrahydrofolate + 5-amino-1-(5-phospho-beta-D-ribosyl)imidazole-4-carboxamide = 5-formamido-1-(5-phospho-D-ribosyl)imidazole-4-carboxamide + (6S)-5,6,7,8-tetrahydrofolate. The enzyme catalyses IMP + H2O = 5-formamido-1-(5-phospho-D-ribosyl)imidazole-4-carboxamide. It functions in the pathway purine metabolism; IMP biosynthesis via de novo pathway; 5-formamido-1-(5-phospho-D-ribosyl)imidazole-4-carboxamide from 5-amino-1-(5-phospho-D-ribosyl)imidazole-4-carboxamide (10-formyl THF route): step 1/1. It participates in purine metabolism; IMP biosynthesis via de novo pathway; IMP from 5-formamido-1-(5-phospho-D-ribosyl)imidazole-4-carboxamide: step 1/1. This is Bifunctional purine biosynthesis protein PurH from Xanthomonas oryzae pv. oryzae (strain PXO99A).